Consider the following 452-residue polypeptide: Tylactone mycaminosyltransferase (452 aa).

Residues 1 to 16 (MRRALDDRRRGPHGPE) are compositionally biased toward basic and acidic residues. Residues 1 to 20 (MRRALDDRRRGPHGPEGKPP) are disordered.

It belongs to the glycosyltransferase 28 family.

It catalyses the reaction tylactone + dTDP-alpha-D-mycaminose = 5-O-beta-D-mycaminosyltylactone + dTDP + H(+). The protein operates within antibiotic biosynthesis; tylosin biosynthesis. Its activity is regulated as follows. The activity of TylM2 is substantially increased by the addition of the accessory protein TylM3. Functionally, involved in the biosynthesis of the macrolide antibiotic tylosin derived from the polyketide lactone tylactone. Catalyzes the transfer of alpha-D-mycaminosyl from dTDP-alpha-D-mycaminose to the 5-hydroxyl group of tylactone to yield 5-O-mycaminosytylactone. It can also accept 16-membered tylactone and 12-membered ring macrolide. In Streptomyces fradiae (Streptomyces roseoflavus), this protein is Tylactone mycaminosyltransferase.